Consider the following 213-residue polypeptide: 3-oxoadipate CoA-transferase subunit B (213 aa).

E50 is an active-site residue.

This sequence belongs to the 3-oxoacid CoA-transferase subunit B family. Heterodimer.

It catalyses the reaction 3-oxoadipate + succinyl-CoA = 3-oxoadipyl-CoA + succinate. The protein operates within aromatic compound metabolism; beta-ketoadipate pathway; acetyl-CoA and succinyl-CoA from 3-oxoadipate: step 1/2. The polypeptide is 3-oxoadipate CoA-transferase subunit B (pcaJ) (Pseudomonas putida (strain ATCC 47054 / DSM 6125 / CFBP 8728 / NCIMB 11950 / KT2440)).